The primary structure comprises 144 residues: Large ribosomal subunit protein uL15 (144 aa).

Basic residues predominate over residues 1–16; the sequence is MVVRKEKKSRKYRGYR. The interval 1–35 is disordered; the sequence is MVVRKEKKSRKYRGYRTHGWGTKGQHRDRGAQGGR.

Belongs to the universal ribosomal protein uL15 family. In terms of assembly, part of the 50S ribosomal subunit.

Functionally, binds to the 23S rRNA. This is Large ribosomal subunit protein uL15 from Sulfolobus acidocaldarius (strain ATCC 33909 / DSM 639 / JCM 8929 / NBRC 15157 / NCIMB 11770).